We begin with the raw amino-acid sequence, 274 residues long: Serine acetyltransferase (274 aa).

It belongs to the transferase hexapeptide repeat family.

The protein localises to the cytoplasm. The enzyme catalyses L-serine + acetyl-CoA = O-acetyl-L-serine + CoA. It functions in the pathway amino-acid biosynthesis; L-cysteine biosynthesis; L-cysteine from L-serine: step 1/2. In Buchnera aphidicola subsp. Acyrthosiphon pisum (strain APS) (Acyrthosiphon pisum symbiotic bacterium), this protein is Serine acetyltransferase (cysE).